A 211-amino-acid chain; its full sequence is Large ribosomal subunit protein bL25 (211 aa).

Residues 188–211 (HREEEKAPEETGEAAPAPTPETGQ) are disordered. A compositionally biased stretch (low complexity) spans 200–211 (EAAPAPTPETGQ).

It belongs to the bacterial ribosomal protein bL25 family. CTC subfamily. In terms of assembly, part of the 50S ribosomal subunit; part of the 5S rRNA/L5/L18/L25 subcomplex. Contacts the 5S rRNA. Binds to the 5S rRNA independently of L5 and L18.

Functionally, this is one of the proteins that binds to the 5S RNA in the ribosome where it forms part of the central protuberance. This chain is Large ribosomal subunit protein bL25, found in Desulforudis audaxviator (strain MP104C).